A 362-amino-acid chain; its full sequence is Homeobox protein extradenticle (362 aa).

A PBC domain is found at 34-225; that stretch reads PRKQDIGEIL…VMILRSRFLD (192 aa). The PBC-A stretch occupies residues 41–120; it reads EILQQIMNIT…EGVAGPEKGG (80 aa). The interval 123–225 is PBC-B; that stretch reads DFLSQSDLTG…VMILRSRFLD (103 aa). Residues 226-288 constitute a DNA-binding region (homeobox; TALE-type); sequence ARRKRRNFSK…NKRIRYKKNI (63 aa). Residues 305–362 form a disordered region; it reads GASPYSMGGPPSGAATPMMSPAPAQDSMGYSLGSGGYDQQQPYDGSMGYDQLHQDLSP.

It belongs to the TALE/PBX homeobox family.

It localises to the nucleus. Transcription factor which acts with the selector homeodomain proteins altering the regulation of downstream target genes such as wingless (wg), teashirt (tsh) and decapentaplegic (dpp), thus affecting segmental identity. The polypeptide is Homeobox protein extradenticle (Anopheles gambiae (African malaria mosquito)).